Consider the following 877-residue polypeptide: TSET complex member tstB (877 aa).

Disordered regions lie at residues 398–437 (HLHHYHQGGSGTVGGSVPSSSSSSSSSSNITTSALSSGSS) and 522–557 (TGLPNPISNNNNSSNNTKDQSTTTTTSTTSSSSNSI). Composition is skewed to low complexity over residues 412–437 (GSVPSSSSSSSSSSNITTSALSSGSS) and 529–556 (SNNNNSSNNTKDQSTTTTTSTTSSSSNS).

As to quaternary structure, component of the TSET complex, a heterohexamer composed of tstA, tstB, tstC, tstD, tstE and tstF, which may act in plasma membrane turnover. tstA, tstB, tstC and tstD are likely to be the core complex members with tstE and tstF acting as associated scaffold proteins.

This Dictyostelium discoideum (Social amoeba) protein is TSET complex member tstB.